Reading from the N-terminus, the 155-residue chain is Deoxyuridine 5'-triphosphate nucleotidohydrolase (155 aa).

Substrate is bound by residues 74–76 (RSG), asparagine 87, and 91–93 (TID).

It belongs to the dUTPase family. Requires Mg(2+) as cofactor.

The enzyme catalyses dUTP + H2O = dUMP + diphosphate + H(+). It participates in pyrimidine metabolism; dUMP biosynthesis; dUMP from dCTP (dUTP route): step 2/2. This enzyme is involved in nucleotide metabolism: it produces dUMP, the immediate precursor of thymidine nucleotides and it decreases the intracellular concentration of dUTP so that uracil cannot be incorporated into DNA. The sequence is that of Deoxyuridine 5'-triphosphate nucleotidohydrolase from Cereibacter sphaeroides (strain ATCC 17023 / DSM 158 / JCM 6121 / CCUG 31486 / LMG 2827 / NBRC 12203 / NCIMB 8253 / ATH 2.4.1.) (Rhodobacter sphaeroides).